Here is a 169-residue protein sequence, read N- to C-terminus: S-ribosylhomocysteine lyase (169 aa).

Positions 54, 58, and 128 each coordinate Fe cation.

This sequence belongs to the LuxS family. Homodimer. The cofactor is Fe cation.

It catalyses the reaction S-(5-deoxy-D-ribos-5-yl)-L-homocysteine = (S)-4,5-dihydroxypentane-2,3-dione + L-homocysteine. Involved in the synthesis of autoinducer 2 (AI-2) which is secreted by bacteria and is used to communicate both the cell density and the metabolic potential of the environment. The regulation of gene expression in response to changes in cell density is called quorum sensing. Catalyzes the transformation of S-ribosylhomocysteine (RHC) to homocysteine (HC) and 4,5-dihydroxy-2,3-pentadione (DPD). This is S-ribosylhomocysteine lyase from Shewanella oneidensis (strain ATCC 700550 / JCM 31522 / CIP 106686 / LMG 19005 / NCIMB 14063 / MR-1).